A 394-amino-acid polypeptide reads, in one-letter code: uncharacterized protein (394 aa).

A run of 11 helical transmembrane segments spans residues 10-30 (PALIVLMSIATGLAVASNYYA), 50-70 (FIVTAAQLGYAAGLLFLVPLG), 79-99 (IVSMTLLAAGGMLITASSQSL), 100-120 (AMMILGTALTGLFSVVAQILV), 138-158 (TIMSGLLLGILLARTVAGLLA), 166-186 (VFWVASVLMALMALALWRGLP), 218-238 (LLGCLTFANFSILWTSMAFLL), 243-263 (FNYSDGVIGLFGLAGAAGALG), 291-311 (WLAIWFGHTSVLALIIGILVL), 337-357 (LTAGYMTSYFIGGAAGSLISA), and 364-384 (GWAGVCLAGATIALVNLLVWW).

The protein belongs to the major facilitator superfamily.

The protein resides in the cell inner membrane. This is an uncharacterized protein from Escherichia coli (strain K12).